We begin with the raw amino-acid sequence, 260 residues long: Uroplakin-1b (260 aa).

The Cytoplasmic segment spans residues 1–15 (MAKDNSTVRCFQGLL). A helical membrane pass occupies residues 16–36 (IFGNVIIGCCGIALTAECIFF). The Extracellular segment spans residues 37–60 (VSDQHSLYPLLEATDNDDIYGAAW). The helical transmembrane segment at 61–81 (IGIFVGICLFCLSVLGIVGIM) threads the bilayer. Over 82–86 (KSSRK) the chain is Cytoplasmic. Residues 87–107 (ILLAYFILMFIVYAFEVASCI) form a helical membrane-spanning segment. The Extracellular portion of the chain corresponds to 108–229 (TAATQQDFFT…ELISGPMNRH (122 aa)). The chain crosses the membrane as a helical span at residues 230–250 (AWGVAWFGFAILCWTFWVLLG). Residues 251–260 (TMFYWSRIEY) are Cytoplasmic-facing.

This sequence belongs to the tetraspanin (TM4SF) family. Heterodimer with uroplakin-3A (UPK3A) or uroplakin-3B (UPK3B). Post-translationally, N-glycosylated with high-mannose oligosaccharides. In terms of tissue distribution, bladder epithelium.

It localises to the membrane. Component of the asymmetric unit membrane (AUM); a highly specialized biomembrane elaborated by terminally differentiated urothelial cells. May play an important role in normal bladder epithelial physiology, possibly in regulating membrane permeability of superficial umbrella cells or in stabilizing the apical membrane through AUM/cytoskeletal interactions. This chain is Uroplakin-1b (UPK1B), found in Homo sapiens (Human).